A 252-amino-acid chain; its full sequence is Putative phosphonates utilization ATP-binding protein PhnK (252 aa).

One can recognise an ABC transporter domain in the interval leucine 6–valine 246. ATP is bound at residue glycine 38–threonine 45.

Belongs to the ABC transporter superfamily. In terms of assembly, forms a complex with PhnG, PhnH, PhnI and PhnJ with the suggested composition PhnG(4)H(2)I(2)J(2)K.

Belongs to an operon involved in alkylphosphonate uptake and C-P lyase. Exact function not known. PhnK is not required for the ribophosphonate triphosphate (RPnTP) synthase reaction. In Escherichia coli (strain K12), this protein is Putative phosphonates utilization ATP-binding protein PhnK (phnK).